The primary structure comprises 367 residues: Septin-1 (367 aa).

Residues 22–296 (KGFDFTLMVA…EGYRARCLQS (275 aa)) form the Septin-type G domain. The G1 motif stretch occupies residues 32–39 (GESGLGKS). Residues 32 to 39 (GESGLGKS), Thr-66, Gly-92, and 171 to 179 (KADALMPKE) each bind GTP. Positions 89–92 (DTPG) are G3 motif. The G4 motif stretch occupies residues 170–173 (GKAD). A Phosphoserine modification is found at Ser-206. GTP-binding residues include Gly-229 and Arg-245. Phosphoserine; by AURKB is present on Ser-248. Phosphothreonine is present on Thr-251. A phosphoserine; by AURKB mark is found at Ser-307 and Ser-315.

Belongs to the TRAFAC class TrmE-Era-EngA-EngB-Septin-like GTPase superfamily. Septin GTPase family. As to quaternary structure, septins polymerize into heterooligomeric protein complexes that form filaments, and can associate with cellular membranes, actin filaments and microtubules. GTPase activity is required for filament formation. Interacts with AURKB.

It is found in the cytoplasm. The protein resides in the cytoskeleton. It localises to the microtubule organizing center. The protein localises to the centrosome. Its subcellular location is the midbody. Its function is as follows. Filament-forming cytoskeletal GTPase. May play a role in cytokinesis (Potential). In Bos taurus (Bovine), this protein is Septin-1.